Here is a 344-residue protein sequence, read N- to C-terminus: uncharacterized protein (344 aa).

This is an uncharacterized protein from Caenorhabditis elegans.